The following is a 61-amino-acid chain: uncharacterized protein (61 aa).

This is an uncharacterized protein from Frog virus 3 (isolate Goorha) (FV-3).